Consider the following 275-residue polypeptide: Translation initiation factor 2 subunit alpha (275 aa).

Positions glycine 12–arginine 83 constitute an S1 motif domain.

It belongs to the eIF-2-alpha family. As to quaternary structure, heterotrimer composed of an alpha, a beta and a gamma chain.

EIF-2 functions in the early steps of protein synthesis by forming a ternary complex with GTP and initiator tRNA. In Pyrococcus furiosus (strain ATCC 43587 / DSM 3638 / JCM 8422 / Vc1), this protein is Translation initiation factor 2 subunit alpha.